The primary structure comprises 56 residues: Large ribosomal subunit protein bL32 (56 aa).

Positions 1 to 36 (MAVQQNKKSRSKRGMRRSHDALSTAQLSVDATSGEV) are disordered. The segment covering 7 to 16 (KKSRSKRGMR) has biased composition (basic residues). A compositionally biased stretch (polar residues) spans 21–31 (ALSTAQLSVDA).

This sequence belongs to the bacterial ribosomal protein bL32 family.

The sequence is that of Large ribosomal subunit protein bL32 from Shewanella oneidensis (strain ATCC 700550 / JCM 31522 / CIP 106686 / LMG 19005 / NCIMB 14063 / MR-1).